The chain runs to 212 residues: MTNYKLDMQKRDKVGSNAVRKLRVKELIPGVIYGKDFEPINVTVDEKELRKVHLMAGTSSLIDVKVDGEEHTVIIKDVQKHPFKNHYVHVDFKEIKMGEVANFTIPVVLEGRDEIRLQPSVLMQLLDEVEIECLPKNLPNEAAVSVIDMQYGDTFEVKDLDVFKNPDIKVLNDETEAVCSLSEPKEEVIEEDVEEVSADVPTVSETEEEDAE.

Residues 181 to 212 (LSEPKEEVIEEDVEEVSADVPTVSETEEEDAE) are disordered. The span at 188–197 (VIEEDVEEVS) shows a compositional bias: acidic residues.

Belongs to the bacterial ribosomal protein bL25 family. CTC subfamily. As to quaternary structure, part of the 50S ribosomal subunit; part of the 5S rRNA/L5/L18/L25 subcomplex. Contacts the 5S rRNA. Binds to the 5S rRNA independently of L5 and L18.

Its function is as follows. This is one of the proteins that binds to the 5S RNA in the ribosome where it forms part of the central protuberance. This Finegoldia magna (strain ATCC 29328 / DSM 20472 / WAL 2508) (Peptostreptococcus magnus) protein is Large ribosomal subunit protein bL25.